A 366-amino-acid chain; its full sequence is Chorismate synthase (366 aa).

NADP(+) is bound at residue R48. FMN is bound by residues 125–127 (RSS), G283, 298–302 (KPTPS), and R324.

The protein belongs to the chorismate synthase family. Homotetramer. Requires FMNH2 as cofactor.

It catalyses the reaction 5-O-(1-carboxyvinyl)-3-phosphoshikimate = chorismate + phosphate. It participates in metabolic intermediate biosynthesis; chorismate biosynthesis; chorismate from D-erythrose 4-phosphate and phosphoenolpyruvate: step 7/7. Its function is as follows. Catalyzes the anti-1,4-elimination of the C-3 phosphate and the C-6 proR hydrogen from 5-enolpyruvylshikimate-3-phosphate (EPSP) to yield chorismate, which is the branch point compound that serves as the starting substrate for the three terminal pathways of aromatic amino acid biosynthesis. This reaction introduces a second double bond into the aromatic ring system. The protein is Chorismate synthase of Lachnospira eligens (strain ATCC 27750 / DSM 3376 / VPI C15-48 / C15-B4) (Eubacterium eligens).